We begin with the raw amino-acid sequence, 246 residues long: Mast cell protease 4 (246 aa).

An N-terminal signal peptide occupies residues Met1–Ala18. A propeptide spans Glu19–Glu20 (activation peptide). In terms of domain architecture, Peptidase S1 spans Ile21–Lys244. Cys50 and Cys66 are oxidised to a cystine. Active-site charge relay system residues include His65 and Asp109. Intrachain disulfides connect Cys143–Cys208 and Cys174–Cys187. Residue Ser202 is the Charge relay system of the active site.

The protein belongs to the peptidase S1 family. Granzyme subfamily. As to quaternary structure, monomer. Interacts with iripin-2, a serine protease inhibitor from Ixodes ricinus saliva. Submucosal mast cells. In femoral muscle, detected in myocytes but not in mast cells.

With respect to regulation, completely inhibited by serine protease inhibitors such as chymostatin, diisopropylfluorophosphate and phenylmethylsulfonyl fluoride, but not by p-tosyl-L-phenylalanine chloromethyl ketone, p-tosyl-L-lysine chloromethyl ketone, pepstatin, E-64, EDTA or o-phenanthroline. Also inhibited by lima bean trypsin inhibitor, soy bean trypsin inhibitor and human plasma alpha1-antichymotrypsin. Has chymotrypsin-like activity. Hydrolyzes the amide bonds of synthetic substrates having Tyr and Phe residues at the P1 position. Preferentially hydrolyzes the 'Tyr-4-|-Ile-5' bond of angiotensin I and the 'Phe-20-|-Ala-21' bond of amyloid beta-protein, and is less active towards the 'Phe-8-|-His-9' bond of angiotensin I and the 'Phe-4-|-Ala-5' and 'Tyr-10-|-Glu-11' bonds of amyloid beta-protein. Involved in thrombin regulation and fibronectin processing. This Mus musculus (Mouse) protein is Mast cell protease 4 (Mcpt4).